The following is a 300-amino-acid chain: TLR adapter interacting with SLC15A4 on the lysosome (300 aa).

A pLxIS motif motif is present at residues 289 to 293 (SLHIS). Residue Ser293 is modified to Phosphoserine.

Interacts (via pLxIS motif) with IRF5; leading to IRF5 activation. Interacts with SLC15A4; leading to its recruitment to endolysosome. Post-translationally, the phosphorylated pLxIS motif constitutes an IRF5-binding motif, leading to recruitment of the transcription factor IRF5 to induce type-I interferons and other cytokines.

The protein resides in the lysosome membrane. The protein localises to the endosome membrane. It is found in the nucleus. Its subcellular location is the cytoplasm. In terms of biological role, innate immune adapter that mediates the recruitment and activation of IRF5 downstream of endolysosomal toll-like receptors TLR7, TLR8 and TLR9. Following recruitment to endolysosome by SLC15A4 downstream of TLR7, TLR8 and TLR9, specifically recruits IRF5 transcription factor via its pLxIS motif, leading to IRF5 activation and subsequent expression of type I interferons. Plays a role in the regulation of endolysosomal pH in immune cells such as B-cells, dendritic cells and monocytes. The chain is TLR adapter interacting with SLC15A4 on the lysosome from Bos taurus (Bovine).